A 726-amino-acid polypeptide reads, in one-letter code: Ribonuclease R (726 aa).

The 329-residue stretch at 262 to 590 folds into the RNB domain; the sequence is RIDLRHLPFF…LVHRVIKNLL (329 aa). Residues 642–723 form the S1 motif domain; the sequence is GDVLTGVISN…NERKIELSLY (82 aa).

This sequence belongs to the RNR ribonuclease family. RNase R subfamily. Monomer.

It localises to the cytoplasm. The enzyme catalyses Exonucleolytic cleavage in the 3'- to 5'-direction to yield nucleoside 5'-phosphates.. In terms of biological role, 3'-5' exoribonuclease that releases 5'-nucleoside monophosphates and is involved in maturation of structured RNAs. The polypeptide is Ribonuclease R (Buchnera aphidicola subsp. Schizaphis graminum (strain Sg)).